The sequence spans 388 residues: Chorismate synthase (388 aa).

Residues arginine 39 and arginine 45 each coordinate NADP(+). FMN contacts are provided by residues 130-132 (RSS), 251-252 (NA), glycine 296, 311-315 (KPIPT), and arginine 337.

This sequence belongs to the chorismate synthase family. As to quaternary structure, homotetramer. It depends on FMNH2 as a cofactor.

The catalysed reaction is 5-O-(1-carboxyvinyl)-3-phosphoshikimate = chorismate + phosphate. It participates in metabolic intermediate biosynthesis; chorismate biosynthesis; chorismate from D-erythrose 4-phosphate and phosphoenolpyruvate: step 7/7. In terms of biological role, catalyzes the anti-1,4-elimination of the C-3 phosphate and the C-6 proR hydrogen from 5-enolpyruvylshikimate-3-phosphate (EPSP) to yield chorismate, which is the branch point compound that serves as the starting substrate for the three terminal pathways of aromatic amino acid biosynthesis. This reaction introduces a second double bond into the aromatic ring system. The protein is Chorismate synthase of Streptococcus sanguinis (strain SK36).